The primary structure comprises 84 residues: Neurotoxin BmK-M10 (84 aa).

Residues 1–19 (MNYLVMISFALLLMKGVES) form the signal peptide. Positions 21-83 (RDAYIAKPEN…VPIRVPGKCQ (63 aa)) constitute an LCN-type CS-alpha/beta domain. Intrachain disulfides connect Cys-31-Cys-82, Cys-35-Cys-55, Cys-41-Cys-65, and Cys-45-Cys-67. Arg-84 is a propeptide (removed by a carboxypeptidase).

In terms of tissue distribution, expressed by the venom gland.

It localises to the secreted. Its function is as follows. Binds to voltage-dependent sodium channels (Nav) and voltage-dependent delayed rectifier potassium channels and inhibits the inactivation of the activated channels, thereby blocking neuronal transmission. Administration to mice at a dosage of 0.8 mg/kg produces an analgesic effect. This Olivierus martensii (Manchurian scorpion) protein is Neurotoxin BmK-M10.